The chain runs to 180 residues: MKSIYFVAGLFVMLVQGSWQHPLQDTEEKPRSFSTSQTDLLDDPDQMNEDKRHSQGTFTSDYSKFLDTRRAQDFLDWLKNTKRNRNEIAKRHDEFERHAEGTFTSDVSSYLEGQAAKEFIAWLVKGRGRRDFPEEVTIVEELRRRHADGSFSDEMNTVLDHLATKDFINWLIQTKITDRK.

The signal sequence occupies residues 1–20 (MKSIYFVAGLFVMLVQGSWQ). Positions 23–56 (LQDTEEKPRSFSTSQTDLLDDPDQMNEDKRHSQG) are disordered. Serine 54 carries the post-translational modification Phosphoserine. A propeptide spanning residues 84-89 (NRNEIA) is cleaved from the precursor. Phosphoserine is present on residues serine 105 and serine 108. Arginine amide is present on arginine 127. Residues 131–145 (DFPEEVTIVEELRRR) constitute a propeptide that is removed on maturation. A phosphoserine mark is found at serine 150 and serine 152.

The protein belongs to the glucagon family. Proglucagon is post-translationally processed in a tissue-specific manner in pancreatic A cells and intestinal L cells. In pancreatic A cells, the major bioactive hormone is glucagon cleaved by PCSK2/PC2. In the intestinal L cells PCSK1/PC1 liberates GLP-1, GLP-2, glicentin and oxyntomodulin. GLP-1 is further N-terminally truncated by post-translational processing in the intestinal L cells resulting in GLP-1(7-37) GLP-1-(7-36)amide. The C-terminal amidation is neither important for the metabolism of GLP-1 nor for its effects on the endocrine pancreas. Glucagon is secreted in the A cells of the islets of Langerhans. GLP-1, GLP-2, oxyntomodulin and glicentin are secreted from enteroendocrine cells throughout the gastrointestinal tract. GLP-1 and GLP-2 are also secreted in selected neurons in the brain.

Its subcellular location is the secreted. Its function is as follows. Plays a key role in glucose metabolism and homeostasis. Regulates blood glucose by increasing gluconeogenesis and decreasing glycolysis. A counterregulatory hormone of insulin, raises plasma glucose levels in response to insulin-induced hypoglycemia. Plays an important role in initiating and maintaining hyperglycemic conditions in diabetes. Potent stimulator of glucose-dependent insulin release. Also stimulates insulin release in response to IL6. Plays important roles on gastric motility and the suppression of plasma glucagon levels. May be involved in the suppression of satiety and stimulation of glucose disposal in peripheral tissues, independent of the actions of insulin. Has growth-promoting activities on intestinal epithelium. May also regulate the hypothalamic pituitary axis (HPA) via effects on LH, TSH, CRH, oxytocin, and vasopressin secretion. Increases islet mass through stimulation of islet neogenesis and pancreatic beta cell proliferation. Inhibits beta cell apoptosis. In terms of biological role, stimulates intestinal growth and up-regulates villus height in the small intestine, concomitant with increased crypt cell proliferation and decreased enterocyte apoptosis. The gastrointestinal tract, from the stomach to the colon is the principal target for GLP-2 action. Plays a key role in nutrient homeostasis, enhancing nutrient assimilation through enhanced gastrointestinal function, as well as increasing nutrient disposal. Stimulates intestinal glucose transport and decreases mucosal permeability. Functionally, significantly reduces food intake. Inhibits gastric emptying in humans. Suppression of gastric emptying may lead to increased gastric distension, which may contribute to satiety by causing a sensation of fullness. Its function is as follows. May modulate gastric acid secretion and the gastro-pyloro-duodenal activity. May play an important role in intestinal mucosal growth in the early period of life. The protein is Pro-glucagon (GCG) of Octodon degus (Degu).